Reading from the N-terminus, the 535-residue chain is EH domain-containing protein 3 (535 aa).

Met1 is subject to N-acetylmethionine. One can recognise a Dynamin-type G domain in the interval 55–286; it reads FDNKPMVLLV…DLFRDIQSLP (232 aa). The G1 motif stretch occupies residues 65–72; it reads GQYSTGKT. 65–72 contributes to the ATP binding site; that stretch reads GQYSTGKT. The tract at residues 91 to 92 is G2 motif; sequence EP. A G3 motif region spans residues 153-156; sequence DTPG. Residues 198-227 are a coiled coil; sequence DEFSEVIKALKNHEDKMRVVLNKADQIETQ. The interval 219–222 is G4 motif; the sequence is NKAD. An ATP-binding site is contributed by Lys220. Residue Ile243 is a region of interest, G5 motif. Position 258 (Trp258) interacts with ATP. Lys315 participates in a covalent cross-link: Glycyl lysine isopeptide (Lys-Gly) (interchain with G-Cter in SUMO). Ser349 and Ser456 each carry phosphoserine. The 89-residue stretch at 444-532 folds into the EH domain; that stretch reads DKPMYDEIFY…AHLLPPSKRK (89 aa). One can recognise an EF-hand domain in the interval 476-511; that stretch reads LPNSVLGKIWKLADIDKDGMLDDDEFALANHLIKVK. Asp489, Asp491, Asp493, Met495, and Glu500 together coordinate Ca(2+). A Glycyl lysine isopeptide (Lys-Gly) (interchain with G-Cter in SUMO) cross-link involves residue Lys511.

The protein belongs to the TRAFAC class dynamin-like GTPase superfamily. Dynamin/Fzo/YdjA family. EHD subfamily. As to quaternary structure, homooligomer, and heterooligomer with EHD1, EHD2 and EHD4, ATP-binding is required for heterooligomerization. Interacts with PACSIN1. Interacts with PACSIN2. Interacts (via EH domain) with MICALL1. Interacts (via EH domain) with RAB11FIP2. Interacts with ANK2. As to expression, highly expressed in heart and brain and moderately expressed in kidney, liver, and placenta.

It is found in the recycling endosome membrane. The protein localises to the cell membrane. Its subcellular location is the cell projection. The protein resides in the cilium membrane. ATP- and membrane-binding protein that controls membrane reorganization/tubulation upon ATP hydrolysis. In vitro causes tubulation of endocytic membranes. Binding to phosphatidic acid induces its membrane tubulation activity. Plays a role in endocytic transport. Involved in early endosome to recycling endosome compartment (ERC), retrograde early endosome to Golgi, and endosome to plasma membrane (rapid recycling) protein transport. Involved in the regulation of Golgi maintenance and morphology. Involved in the recycling of internalized D1 dopamine receptor. Plays a role in cardiac protein trafficking probably implicating ANK2. Involved in the ventricular membrane targeting of SLC8A1 and CACNA1C and probably the atrial membrane localization of CACNA1GG and CACNA1H implicated in the regulation of atrial myocyte excitability and cardiac conduction. In conjunction with EHD4 may be involved in endocytic trafficking of KDR/VEGFR2 implicated in control of glomerular function. Involved in the rapid recycling of integrin beta-3 implicated in cell adhesion maintenance. Involved in the unidirectional retrograde dendritic transport of endocytosed BACE1 and in efficient sorting of BACE1 to axons implicating a function in neuronal APP processing. Plays a role in the formation of the ciliary vesicle, an early step in cilium biogenesis; possibly sharing redundant functions with EHD1. The chain is EH domain-containing protein 3 from Homo sapiens (Human).